Reading from the N-terminus, the 1342-residue chain is DNA-directed RNA polymerase subunit beta (1342 aa).

The protein belongs to the RNA polymerase beta chain family. In terms of assembly, the RNAP catalytic core consists of 2 alpha, 1 beta, 1 beta' and 1 omega subunit. When a sigma factor is associated with the core the holoenzyme is formed, which can initiate transcription.

The enzyme catalyses RNA(n) + a ribonucleoside 5'-triphosphate = RNA(n+1) + diphosphate. DNA-dependent RNA polymerase catalyzes the transcription of DNA into RNA using the four ribonucleoside triphosphates as substrates. The polypeptide is DNA-directed RNA polymerase subunit beta (Aliivibrio fischeri (strain ATCC 700601 / ES114) (Vibrio fischeri)).